Consider the following 550-residue polypeptide: Arginine--tRNA ligase (550 aa).

The 'HIGH' region signature appears at 130–140; it reads ANPTGPIHLGG.

Belongs to the class-I aminoacyl-tRNA synthetase family. As to quaternary structure, monomer.

It is found in the cytoplasm. It catalyses the reaction tRNA(Arg) + L-arginine + ATP = L-arginyl-tRNA(Arg) + AMP + diphosphate. The polypeptide is Arginine--tRNA ligase (argS) (Corynebacterium glutamicum (strain ATCC 13032 / DSM 20300 / JCM 1318 / BCRC 11384 / CCUG 27702 / LMG 3730 / NBRC 12168 / NCIMB 10025 / NRRL B-2784 / 534)).